The following is a 63-amino-acid chain: Cytochrome b-c1 complex subunit 9 (63 aa).

The Mitochondrial matrix segment spans residues A2–F21. Residues A22 to I47 traverse the membrane as a helical segment. Residues N48–K63 are Mitochondrial intermembrane-facing.

This sequence belongs to the UQCR10/QCR9 family. In terms of assembly, component of the ubiquinol-cytochrome c oxidoreductase (cytochrome b-c1 complex, complex III, CIII), a multisubunit enzyme composed of 11 subunits. The complex is composed of 3 respiratory subunits cytochrome b, cytochrome c1 and Rieske protein UQCRFS1, 2 core protein subunits UQCRC1/QCR1 and UQCRC2/QCR2, and 6 low-molecular weight protein subunits UQCRH/QCR6, UQCRB/QCR7, UQCRQ/QCR8, UQCR10/QCR9, UQCR11/QCR10 and subunit 9, the cleavage product of Rieske protein UQCRFS1. The complex exists as an obligatory dimer and forms supercomplexes (SCs) in the inner mitochondrial membrane with NADH-ubiquinone oxidoreductase (complex I, CI) and cytochrome c oxidase (complex IV, CIV), resulting in different assemblies (supercomplex SCI(1)III(2)IV(1) and megacomplex MCI(2)III(2)IV(2)). Interacts with STMP1.

Its subcellular location is the mitochondrion inner membrane. In terms of biological role, component of the ubiquinol-cytochrome c oxidoreductase, a multisubunit transmembrane complex that is part of the mitochondrial electron transport chain which drives oxidative phosphorylation. The respiratory chain contains 3 multisubunit complexes succinate dehydrogenase (complex II, CII), ubiquinol-cytochrome c oxidoreductase (cytochrome b-c1 complex, complex III, CIII) and cytochrome c oxidase (complex IV, CIV), that cooperate to transfer electrons derived from NADH and succinate to molecular oxygen, creating an electrochemical gradient over the inner membrane that drives transmembrane transport and the ATP synthase. The cytochrome b-c1 complex catalyzes electron transfer from ubiquinol to cytochrome c, linking this redox reaction to translocation of protons across the mitochondrial inner membrane, with protons being carried across the membrane as hydrogens on the quinol. In the process called Q cycle, 2 protons are consumed from the matrix, 4 protons are released into the intermembrane space and 2 electrons are passed to cytochrome c. This chain is Cytochrome b-c1 complex subunit 9 (UQCR10), found in Homo sapiens (Human).